We begin with the raw amino-acid sequence, 415 residues long: 3-isopropylmalate dehydratase large subunit (415 aa).

Residues Cys-297, Cys-355, and Cys-358 each coordinate [4Fe-4S] cluster.

It belongs to the aconitase/IPM isomerase family. LeuC type 2 subfamily. As to quaternary structure, heterodimer of LeuC and LeuD. [4Fe-4S] cluster serves as cofactor.

It carries out the reaction (2R,3S)-3-isopropylmalate = (2S)-2-isopropylmalate. It participates in amino-acid biosynthesis; L-leucine biosynthesis; L-leucine from 3-methyl-2-oxobutanoate: step 2/4. Functionally, catalyzes the isomerization between 2-isopropylmalate and 3-isopropylmalate, via the formation of 2-isopropylmaleate. This Caldivirga maquilingensis (strain ATCC 700844 / DSM 13496 / JCM 10307 / IC-167) protein is 3-isopropylmalate dehydratase large subunit.